The following is a 324-amino-acid chain: tRNA (cytidine(32)/guanosine(34)-2'-O)-methyltransferase (324 aa).

5 residues coordinate S-adenosyl-L-methionine: glycine 53, tryptophan 55, aspartate 75, aspartate 91, and aspartate 116. The Proton acceptor role is filled by lysine 156. The tract at residues 221–240 (DFNQLDGPTRVIVPFVACGD) is required for binding to WDR6.

Belongs to the class I-like SAM-binding methyltransferase superfamily. RNA methyltransferase RlmE family. TRM7 subfamily. As to quaternary structure, interacts with WDR6; the interaction is direct, and required for 2'-O-methylation of position 34 in substrate tRNAs.

The protein localises to the cytoplasm. The protein resides in the nucleus. It carries out the reaction cytidine(32)/guanosine(34) in tRNA + 2 S-adenosyl-L-methionine = 2'-O-methylcytidine(32)/2'-O-methylguanosine(34) in tRNA + 2 S-adenosyl-L-homocysteine + 2 H(+). Methylates the 2'-O-ribose of nucleotides at positions 32 and 34 of the tRNA anticodon loop of substrate tRNAs. Requisite for faithful cytoplasmic translation. Requires THADA for methylation of the cytidine at position 32 of the anticodon loop of substrate tRNAs. Requires WDR6 for methylation of the nucleotide at position 34 of the anticodon loop of substrate tRNAs. Promotes translation efficiency of the UUU codon. Plays a role in neurogenesis. Required for expression of genes involved in neurogenesis and mitochondrial translation and energy generation. Requisite for RNA-mediated gene silencing. May modify position 32 in tRNA(Arg(ACG)), tRNA(Gln(CUG)), tRNA(Leu(UAA)), tRNA(Leu(UAG)), tRNA(Leu(AAG)), tRNA(Leu(CAG)), tRNA(Phe(GAA)), tRNA(Trp(CCA)) and tRNA(Val(AAC)), and position 34 in tRNA(Phe(GAA)), tRNA(Leu(CAA)), tRNA(Leu(UAA)), tRNA(Sec(UCA)), and tRNA(Trp(CCA)). In Mus musculus (Mouse), this protein is tRNA (cytidine(32)/guanosine(34)-2'-O)-methyltransferase.